The primary structure comprises 283 residues: Nucleotide-binding protein THEYE_A0235 (283 aa).

12–19 provides a ligand contact to ATP; it reads GLSGGGKT. Residue 62–65 coordinates GTP; the sequence is DIRV.

This sequence belongs to the RapZ-like family.

Functionally, displays ATPase and GTPase activities. This is Nucleotide-binding protein THEYE_A0235 from Thermodesulfovibrio yellowstonii (strain ATCC 51303 / DSM 11347 / YP87).